The following is a 267-amino-acid chain: Apolipoprotein A-I (267 aa).

The signal sequence occupies residues 1 to 18 (MKAAVLTLAVLFLTGSQA). A run of 2 repeats spans residues 68–89 (LKLL…EQLG) and 90–111 (PVTQ…QEMS). Residues 68–267 (LKLLDNWDSV…EEYTKKLNTQ (200 aa)) form a 10 X approximate tandem repeats region. The residue at position 110 (Met110) is a Methionine sulfoxide. The stretch at 112–122 (KDLEEVKAKVQ) is one 3; half-length repeat. 5 repeat units span residues 123 to 144 (PYLD…QKVE), 145 to 166 (PLRA…EKLS), 167 to 188 (PLGE…THLA), 189 to 210 (PYSD…ENGG), and 211 to 232 (ARLA…EKAK). Met136 carries the methionine sulfoxide modification. A 9; half-length repeat occupies 233-243 (PALEDLRQGLL). The stretch at 244–267 (PVLESFKVSFLSALEEYTKKLNTQ) is repeat 10.

It belongs to the apolipoprotein A1/A4/E family. Homodimer. Interacts with APOA1BP and CLU. Component of a sperm activating protein complex (SPAP), consisting of APOA1, an immunoglobulin heavy chain, an immunoglobulin light chain and albumin. Interacts with NDRG1. Interacts with SCGB3A2. Interacts with NAXE and YJEFN3. Post-translationally, glycosylated. In terms of processing, palmitoylated. Phosphorylation sites are present in the extracellular medium. As to expression, major protein of plasma HDL, also found in chylomicrons.

The protein localises to the secreted. Functionally, participates in the reverse transport of cholesterol from tissues to the liver for excretion by promoting cholesterol efflux from tissues and by acting as a cofactor for the lecithin cholesterol acyltransferase (LCAT). As part of the SPAP complex, activates spermatozoa motility. This chain is Apolipoprotein A-I (APOA1), found in Pan paniscus (Pygmy chimpanzee).